Consider the following 308-residue polypeptide: Porphobilinogen deaminase (308 aa).

At Cys241 the chain carries S-(dipyrrolylmethanemethyl)cysteine.

It belongs to the HMBS family. Monomer. Dipyrromethane serves as cofactor.

The catalysed reaction is 4 porphobilinogen + H2O = hydroxymethylbilane + 4 NH4(+). It participates in porphyrin-containing compound metabolism; protoporphyrin-IX biosynthesis; coproporphyrinogen-III from 5-aminolevulinate: step 2/4. In terms of biological role, tetrapolymerization of the monopyrrole PBG into the hydroxymethylbilane pre-uroporphyrinogen in several discrete steps. The polypeptide is Porphobilinogen deaminase (Staphylococcus epidermidis (strain ATCC 35984 / DSM 28319 / BCRC 17069 / CCUG 31568 / BM 3577 / RP62A)).